We begin with the raw amino-acid sequence, 98 residues long: Prostate and testis expressed protein 3 (98 aa).

An N-terminal signal peptide occupies residues 1-20 (MNKHFLFLFLLYCLIVAVTS). The UPAR/Ly6 domain maps to 21-97 (LQCITCHLRT…CCNYNYCNFK (77 aa)). 4 disulfide bridges follow: C23-C50, C26-C35, C42-C68, and C72-C88.

This sequence belongs to the PATE family. As to expression, specifically expressed in prostate and testis.

Its subcellular location is the secreted. In Homo sapiens (Human), this protein is Prostate and testis expressed protein 3 (PATE3).